The sequence spans 346 residues: Biotin synthase (346 aa).

In terms of domain architecture, Radical SAM core spans 36–265 (YFGRQVMLHR…KAEIRIGGGR (230 aa)). [4Fe-4S] cluster contacts are provided by Cys54, Cys58, and Cys61. Positions 98, 130, 190, and 260 each coordinate [2Fe-2S] cluster.

This sequence belongs to the radical SAM superfamily. Biotin synthase family. In terms of assembly, homodimer. [4Fe-4S] cluster serves as cofactor. The cofactor is [2Fe-2S] cluster.

It catalyses the reaction (4R,5S)-dethiobiotin + (sulfur carrier)-SH + 2 reduced [2Fe-2S]-[ferredoxin] + 2 S-adenosyl-L-methionine = (sulfur carrier)-H + biotin + 2 5'-deoxyadenosine + 2 L-methionine + 2 oxidized [2Fe-2S]-[ferredoxin]. The protein operates within cofactor biosynthesis; biotin biosynthesis; biotin from 7,8-diaminononanoate: step 2/2. Functionally, catalyzes the conversion of dethiobiotin (DTB) to biotin by the insertion of a sulfur atom into dethiobiotin via a radical-based mechanism. This is Biotin synthase from Acaryochloris marina (strain MBIC 11017).